The chain runs to 115 residues: Peptidyl-tRNA hydrolase (115 aa).

It belongs to the PTH2 family.

Its subcellular location is the cytoplasm. The catalysed reaction is an N-acyl-L-alpha-aminoacyl-tRNA + H2O = an N-acyl-L-amino acid + a tRNA + H(+). Functionally, the natural substrate for this enzyme may be peptidyl-tRNAs which drop off the ribosome during protein synthesis. This is Peptidyl-tRNA hydrolase from Methanococcoides burtonii (strain DSM 6242 / NBRC 107633 / OCM 468 / ACE-M).